A 225-amino-acid chain; its full sequence is MTIQGSDRKGTLLLLVMSNLLFCQNVHPLPICHSGNCQMTLQELFDRVIMLSHYVYMMSADMFIEFEKRYAQDHEFIAKAINDCPTSSLATPEDKEEAQQVPPEVLLNLILSLVHSWNGPLFQLVTEVDGIHEASDAIISRAKEIGEQNKRLLEGIEKILGQAYPEAKGNEVYSVWSQFPSLQGIDEESRDLALYNKIRCLRRDSHKVDNYLKLLRCRIVHNNNC.

The first 28 residues, 1–28 (MTIQGSDRKGTLLLLVMSNLLFCQNVHP), serve as a signal peptide directing secretion. Cys32 and Cys37 are joined by a disulfide. Ser52 and Ser116 each carry phosphoserine. 2 disulfides stabilise this stretch: Cys84–Cys200 and Cys217–Cys225.

This sequence belongs to the somatotropin/prolactin family. As to quaternary structure, interacts with PRLR.

Its subcellular location is the secreted. Its function is as follows. Prolactin acts primarily on the mammary gland by promoting lactation. This is Prolactin (PRL) from Alexandromys montebelli (Japanese grass vole).